A 161-amino-acid chain; its full sequence is uncharacterized protein (161 aa).

The helical transmembrane segment at 5–25 (GPTLLSLLAALLVSLGLLLWY) threads the bilayer.

It belongs to the IIV-6 203L/325L family.

Its subcellular location is the membrane. This is an uncharacterized protein from Invertebrate iridescent virus 3 (IIV-3).